The sequence spans 458 residues: UDP-N-acetylmuramate--L-alanine ligase (458 aa).

118–124 (GTHGKTT) is a binding site for ATP.

The protein belongs to the MurCDEF family.

Its subcellular location is the cytoplasm. It carries out the reaction UDP-N-acetyl-alpha-D-muramate + L-alanine + ATP = UDP-N-acetyl-alpha-D-muramoyl-L-alanine + ADP + phosphate + H(+). It participates in cell wall biogenesis; peptidoglycan biosynthesis. Cell wall formation. The chain is UDP-N-acetylmuramate--L-alanine ligase from Clostridium novyi (strain NT).